The chain runs to 93 residues: uncharacterized protein (93 aa).

Residues 25 to 68 (DIKKLSQVKSELEQGKALLEEEKKELIEKNSNLNLQISNMNHLK) adopt a coiled-coil conformation.

This is an uncharacterized protein from Dictyostelium discoideum (Social amoeba).